Reading from the N-terminus, the 431-residue chain is MVNTMKTKLLCVLLLCGAVFSLPRQETYRQLARGSRAYGGCSELRCFNGGTCWQAASFSDFVCQCPKGYTGKQCEVDTHATCYKDQGVTYRGTWSTSESGAQCINWNSNLLTRRTYNGRRSDAITLGLGNHNYCRNPDNNSKPWCYVIKASKFILEFCSVPVCSKATCGLRKYKEPQLHSTGGLFTDITSHPWQAAIFAQNRRSSGERFLCGGILISSCWVLTAAHCFQERYPPQHLRVVLGRTYRVKPGKEEQTFEVEKCIIHEEFDDDTYNNDIALLQLKSGSPQCAQESDSVRAICLPEANLQLPDWTECELSGYGKHKSSSPFYSEQLKEGHVRLYPSSRCTSKFLFNKTVTNNMLCAGDTRSGEIYPNVHDACQGDSGGPLVCMNDNHMTLLGIISWGVGCGEKDIPGVYTKVTNYLGWIRDNMRP.

An N-terminal signal peptide occupies residues 1 to 36 (MVNTMKTKLLCVLLLCGAVFSLPRQETYRQLARGSR). The region spanning 37–75 (AYGGCSELRCFNGGTCWQAASFSDFVCQCPKGYTGKQCE) is the EGF-like domain. Intrachain disulfides connect cysteine 41/cysteine 52, cysteine 46/cysteine 63, cysteine 65/cysteine 74, cysteine 82/cysteine 163, cysteine 103/cysteine 145, cysteine 134/cysteine 158, cysteine 168/cysteine 299, cysteine 211/cysteine 227, cysteine 219/cysteine 288, cysteine 313/cysteine 388, cysteine 345/cysteine 361, and cysteine 378/cysteine 406. The 82-residue stretch at 82 to 163 (CYKDQGVTYR…ILEFCSVPVC (82 aa)) folds into the Kringle domain. Asparagine 139 carries an N-linked (GlcNAc...) asparagine glycan. One can recognise a Peptidase S1 domain in the interval 180 to 430 (STGGLFTDIT…YLGWIRDNMR (251 aa)). Active-site charge relay system residues include histidine 226 and aspartate 275. Residue asparagine 352 is glycosylated (N-linked (GlcNAc...) asparagine). Serine 382 functions as the Charge relay system in the catalytic mechanism.

This sequence belongs to the peptidase S1 family. As to quaternary structure, monomer.

The protein localises to the secreted. It catalyses the reaction Specific cleavage of Arg-|-Val bond in plasminogen to form plasmin.. In terms of biological role, probably essential to support the feeding habits of this exclusively haematophagous animal. Probable potent thrombolytic agent. This chain is Salivary plasminogen activator beta, found in Desmodus rotundus (Vampire bat).